The sequence spans 79 residues: Serine protease inhibitor Kazal-type 1-like (79 aa).

The N-terminal stretch at 1–23 (MKVAIIFLLSALALLNLAGNTTA) is a signal peptide. The region spanning 26 to 79 (IGKKANCPNTLVGCPRDYDPVCGTDGKTYANECILCFENRKFGTSIRIQRRGLC) is the Kazal-like domain. 3 disulfides stabilise this stretch: cysteine 32–cysteine 61, cysteine 39–cysteine 58, and cysteine 47–cysteine 79.

Seminal vesicle.

It localises to the secreted. Functionally, serine protease inhibitor which exhibits anti-trypsin activity. In the pancreas, protects against trypsin-catalyzed premature activation of zymogens. In terms of biological role, in the male reproductive tract, binds to sperm heads where it modulates sperm capacitance by inhibiting calcium uptake and nitrogen oxide (NO) production. The polypeptide is Serine protease inhibitor Kazal-type 1-like (Rattus norvegicus (Rat)).